We begin with the raw amino-acid sequence, 244 residues long: rRNA adenine N-6-methyltransferase (244 aa).

Residues N11, I13, G38, E59, D84, and N101 each coordinate S-adenosyl-L-methionine.

Belongs to the class I-like SAM-binding methyltransferase superfamily. rRNA adenine N(6)-methyltransferase family.

The catalysed reaction is adenosine(2085) in 23S rRNA + 2 S-adenosyl-L-methionine = N(6)-dimethyladenosine(2085) in 23S rRNA + 2 S-adenosyl-L-homocysteine + 2 H(+). In terms of biological role, this protein produces a dimethylation of the adenine residue at position 2085 in 23S rRNA, resulting in reduced affinity between ribosomes and macrolide-lincosamide-streptogramin B antibiotics. This Staphylococcus aureus protein is rRNA adenine N-6-methyltransferase (ermC).